The primary structure comprises 339 residues: Uroporphyrinogen decarboxylase (339 aa).

Substrate-binding positions include 21-25, aspartate 71, tyrosine 146, serine 201, and histidine 316; that span reads RQAGR.

Belongs to the uroporphyrinogen decarboxylase family. As to quaternary structure, homodimer.

It localises to the cytoplasm. The enzyme catalyses uroporphyrinogen III + 4 H(+) = coproporphyrinogen III + 4 CO2. The protein operates within porphyrin-containing compound metabolism; protoporphyrin-IX biosynthesis; coproporphyrinogen-III from 5-aminolevulinate: step 4/4. In terms of biological role, catalyzes the decarboxylation of four acetate groups of uroporphyrinogen-III to yield coproporphyrinogen-III. The sequence is that of Uroporphyrinogen decarboxylase from Rickettsia canadensis (strain McKiel).